The chain runs to 71 residues: Large ribosomal subunit protein bL31 (71 aa).

Cysteine 16, cysteine 18, cysteine 37, and cysteine 40 together coordinate Zn(2+).

The protein belongs to the bacterial ribosomal protein bL31 family. Type A subfamily. Part of the 50S ribosomal subunit. It depends on Zn(2+) as a cofactor.

Its function is as follows. Binds the 23S rRNA. This is Large ribosomal subunit protein bL31 from Actinobacillus succinogenes (strain ATCC 55618 / DSM 22257 / CCUG 43843 / 130Z).